The chain runs to 148 residues: Calcium-regulated heat stable protein 1 (148 aa).

The segment covering 1-12 has biased composition (pro residues); that stretch reads MSSEPPPPPLQP. The interval 1–47 is disordered; that stretch reads MSSEPPPPPLQPPTHQTSVGLLDTPRTRDRSPSPLRGNVVPSPLPTR. Ser2 carries the post-translational modification N-acetylserine. 3 positions are modified to phosphoserine: Ser31, Ser33, and Ser42. Phosphothreonine is present on Thr46. Residues Ser53 and Ser59 each carry the phosphoserine modification. In terms of domain architecture, CSD spans 63–130; sequence VYKGVCKCFC…KLQAVEVVIT (68 aa). Ser147 carries the post-translational modification Phosphoserine.

As to quaternary structure, homodimer. Interacts with STYX. Can be phosphorylated by DYRK2 (in vitro). Dephosphorylated by calcineurin in a Ca(2+) dependent manner.

It is found in the cytoplasm. It localises to the P-body. The protein localises to the cytoplasmic granule. Binds mRNA and regulates the stability of target mRNA. This chain is Calcium-regulated heat stable protein 1 (Carhsp1), found in Mus musculus (Mouse).